The chain runs to 67 residues: ATP synthase F(0) complex subunit 8 (67 aa).

A helical transmembrane segment spans residues 8-24; sequence TWFTTIVAMILSLFILM. Residue Lys-54 is modified to N6-acetyllysine; alternate. Residue Lys-54 is modified to N6-succinyllysine; alternate. At Lys-57 the chain carries N6-acetyllysine.

This sequence belongs to the ATPase protein 8 family. As to quaternary structure, component of the ATP synthase complex composed at least of ATP5F1A/subunit alpha, ATP5F1B/subunit beta, ATP5MC1/subunit c (homooctomer), MT-ATP6/subunit a, MT-ATP8/subunit 8, ATP5ME/subunit e, ATP5MF/subunit f, ATP5MG/subunit g, ATP5MK/subunit k, ATP5MJ/subunit j, ATP5F1C/subunit gamma, ATP5F1D/subunit delta, ATP5F1E/subunit epsilon, ATP5PF/subunit F6, ATP5PB/subunit b, ATP5PD/subunit d, ATP5PO/subunit OSCP. ATP synthase complex consists of a soluble F(1) head domain (subunits alpha(3) and beta(3)) - the catalytic core - and a membrane F(0) domain - the membrane proton channel (subunits c, a, 8, e, f, g, k and j). These two domains are linked by a central stalk (subunits gamma, delta, and epsilon) rotating inside the F1 region and a stationary peripheral stalk (subunits F6, b, d, and OSCP). Interacts with PRICKLE3.

The protein resides in the mitochondrion membrane. In terms of biological role, subunit 8, of the mitochondrial membrane ATP synthase complex (F(1)F(0) ATP synthase or Complex V) that produces ATP from ADP in the presence of a proton gradient across the membrane which is generated by electron transport complexes of the respiratory chain. ATP synthase complex consist of a soluble F(1) head domain - the catalytic core - and a membrane F(1) domain - the membrane proton channel. These two domains are linked by a central stalk rotating inside the F(1) region and a stationary peripheral stalk. During catalysis, ATP synthesis in the catalytic domain of F(1) is coupled via a rotary mechanism of the central stalk subunits to proton translocation. In vivo, can only synthesize ATP although its ATP hydrolase activity can be activated artificially in vitro. Part of the complex F(0) domain. The protein is ATP synthase F(0) complex subunit 8 of Oryctolagus cuniculus (Rabbit).